The primary structure comprises 205 residues: MANLKVMDQNGKDSGEVTLNDKVFGIEPNESVVFETIIRQRAGKRQGTSKVKNRSAVRGGGKKPWRQKGTGRARQGSIRSPQWRGGGTVFGPTPRSYAYTMPRKQRRLAIKSVLSQKMIDKDLIVLDKLAMSAPKTKDLVSMLNSLNVDGKVLIVSDDNNVQLSARNLAKVKAVPVNGLNVEDAVNYGKLILTQDAVKKIEEVLA.

The tract at residues 43–96 is disordered; that stretch reads GKRQGTSKVKNRSAVRGGGKKPWRQKGTGRARQGSIRSPQWRGGGTVFGPTPRS. Residues 51-71 show a composition bias toward basic residues; that stretch reads VKNRSAVRGGGKKPWRQKGTG.

Belongs to the universal ribosomal protein uL4 family. In terms of assembly, part of the 50S ribosomal subunit.

In terms of biological role, one of the primary rRNA binding proteins, this protein initially binds near the 5'-end of the 23S rRNA. It is important during the early stages of 50S assembly. It makes multiple contacts with different domains of the 23S rRNA in the assembled 50S subunit and ribosome. Forms part of the polypeptide exit tunnel. The sequence is that of Large ribosomal subunit protein uL4 from Lactobacillus helveticus (strain DPC 4571).